Consider the following 437-residue polypeptide: 3-deoxy-D-manno-octulosonic acid transferase (437 aa).

Residues 16-36 (VVLVCAFVIALPKLLYKMLVY) form a helical; Signal-anchor membrane-spanning segment. The Proton acceptor role is filled by E70. Residues 279–280 (PR), 319–321 (IGL), and 346–349 (NLLE) contribute to the CMP site.

The protein belongs to the glycosyltransferase group 1 family. Glycosyltransferase 30 subfamily.

Its subcellular location is the cell inner membrane. The catalysed reaction is lipid IVA (E. coli) + CMP-3-deoxy-beta-D-manno-octulosonate = alpha-Kdo-(2-&gt;6)-lipid IVA (E. coli) + CMP + H(+). It catalyses the reaction alpha-Kdo-(2-&gt;6)-lipid IVA (E. coli) + CMP-3-deoxy-beta-D-manno-octulosonate = alpha-Kdo-(2-&gt;4)-alpha-Kdo-(2-&gt;6)-lipid IVA (E. coli) + CMP + H(+). It carries out the reaction alpha-Kdo-(2-&gt;4)-alpha-Kdo-(2-&gt;6)-lipid IVA (E. coli) + CMP-3-deoxy-beta-D-manno-octulosonate = alpha-Kdo-(2-&gt;8)-alpha-Kdo-(2-&gt;4)-alpha-Kdo-(2-&gt;6)-lipid IVA (E. coli) + CMP + H(+). Its pathway is bacterial outer membrane biogenesis; LPS core biosynthesis. Its function is as follows. Involved in lipopolysaccharide (LPS) biosynthesis. Catalyzes the transfer of three 3-deoxy-D-manno-octulosonate (Kdo) residues from CMP-Kdo to lipid IV(A), the tetraacyldisaccharide-1,4'-bisphosphate precursor of lipid A. Thus generates the genus-specific LPS epitope of Chlamydia, composed of the trisaccharide alpha-Kdo-(2-&gt;8)-alpha-Kdo-(2-&gt;4)-alpha-Kdo. The protein is 3-deoxy-D-manno-octulosonic acid transferase (waaA) of Chlamydia pneumoniae (Chlamydophila pneumoniae).